Reading from the N-terminus, the 525-residue chain is GMP synthase [glutamine-hydrolyzing] (525 aa).

The Glutamine amidotransferase type-1 domain occupies 9-207 (RILILDFGSQ…VRDICQCEAL (199 aa)). The active-site Nucleophile is Cys86. Active-site residues include His181 and Glu183. The GMPS ATP-PPase domain occupies 208-400 (WTPAKIIDDA…LGLPYDMLYR (193 aa)). 235 to 241 (SGGVDSS) contacts ATP.

Homodimer.

It catalyses the reaction XMP + L-glutamine + ATP + H2O = GMP + L-glutamate + AMP + diphosphate + 2 H(+). It functions in the pathway purine metabolism; GMP biosynthesis; GMP from XMP (L-Gln route): step 1/1. Catalyzes the synthesis of GMP from XMP. The protein is GMP synthase [glutamine-hydrolyzing] of Escherichia coli O8 (strain IAI1).